A 420-amino-acid polypeptide reads, in one-letter code: Hemocyanin 2-c chain (420 aa).

Residues 1–12 (DFGHSKKIRKNV) show a composition bias toward basic residues. The interval 1–20 (DFGHSKKIRKNVHSLTAEEQ) is disordered. Cu cation is bound at residue His46. A disulfide bond links Cys52 and Cys63. Positions 66, 73, 185, 189, and 216 each coordinate Cu cation. Cystine bridges form between Cys175-Cys242 and Cys335-Cys342.

O-glycosylated. In terms of tissue distribution, hemolymph.

It is found in the secreted. Its subcellular location is the extracellular space. Its function is as follows. Hemocyanins are copper-containing oxygen carriers occurring freely dissolved in the hemolymph of many mollusks and arthropods. The sequence is that of Hemocyanin 2-c chain from Megathura crenulata (Giant keyhole limpet).